Here is a 255-residue protein sequence, read N- to C-terminus: Kallikrein-4 (255 aa).

An N-terminal signal peptide occupies residues 1 to 25 (MMVTARTPWGWFLGCLILEVTGASA). Positions 26-31 (SSVSSR) are excised as a propeptide. Positions 32-253 (IIQGQDCSPH…FTNWIQTIIQ (222 aa)) constitute a Peptidase S1 domain. Position 41 (H41) interacts with Zn(2+). A disulfide bridge links C57 with C73. The Charge relay system role is filled by H72. Residue E92 participates in Zn(2+) binding. The active-site Charge relay system is D117. N-linked (GlcNAc...) asparagine glycosylation is found at N124 and N170. Intrachain disulfides connect C149–C214, C179–C193, and C204–C229. S208 (charge relay system) is an active-site residue.

It belongs to the peptidase S1 family. Kallikrein subfamily. Post-translationally, N-glycosylated. The N-glycan structures are of complex diantennary or triantennary type, which may be further modified with up to 2 sialic acid residues.

The protein localises to the secreted. Has a major role in enamel formation. Required during the maturation stage of tooth development for clearance of enamel proteins and normal structural patterning of the crystalline matrix. The sequence is that of Kallikrein-4 from Mus musculus (Mouse).